Here is a 201-residue protein sequence, read N- to C-terminus: IMP cyclohydrolase (201 aa).

This sequence belongs to the archaeal IMP cyclohydrolase family.

The catalysed reaction is IMP + H2O = 5-formamido-1-(5-phospho-D-ribosyl)imidazole-4-carboxamide. Its pathway is purine metabolism; IMP biosynthesis via de novo pathway; IMP from 5-formamido-1-(5-phospho-D-ribosyl)imidazole-4-carboxamide: step 1/1. Catalyzes the cyclization of 5-formylamidoimidazole-4-carboxamide ribonucleotide to IMP. The protein is IMP cyclohydrolase of Methanococcus maripaludis (strain C7 / ATCC BAA-1331).